Consider the following 417-residue polypeptide: MAALDRSMARVEFDPDGNITDANENFLTLLGYRRDEILGKPHRQLCDGAYAQSEDYRRFWERLRRGEHFSGRCKRITREGRPLWLEATYNPVRDGQGRLLKVVKYASDIDAIVHQEHEMQSKLDALSRSMAMIEFDLDGNVLAANDNFLATMGYGRAELASANHRQFCEPGYRDGPQYADLWRRLNRGEYVTGQFRRVHRNGQPVWLEASYNPVYDADGKLYKVVKFASDVSDRMRRYQAEADNAHQAHTLSTETRTVAEHGALIIQSAVEEMLKIANTLDASSLNIGELSQHSQQITSIVNTIREIAEQTNLLALNAAIEAARAGDQGRGFAVVADEVRQLAERTSKSTKEIADMIGRIQTGTRSVIDDMQHSQEQARRGVELANEAGAAILGIRESTHKVVEAVQQFSRTLNADL.

In terms of domain architecture, PAS 1 spans 1–66 (MAALDRSMAR…RRFWERLRRG (66 aa)). A PAC 1 domain is found at 67–114 (EHFSGRCKRITREGRPLWLEATYNPVRDGQGRLLKVVKYASDIDAIVH). The PAS 2 domain maps to 115-188 (QEHEMQSKLD…ADLWRRLNRG (74 aa)). One can recognise a PAC 2 domain in the interval 191-241 (VTGQFRRVHRNGQPVWLEASYNPVYDADGKLYKVVKFASDVSDRMRRYQAE). The Methyl-accepting transducer domain maps to 242–417 (ADNAHQAHTL…QFSRTLNADL (176 aa)).

Its function is as follows. Essential for biofilm dispersion by sensing environmental cues. May be involved in sensing and transducing signals within cells, resulting in the modulation of c-di-GMP levels, swimming motility and adhesiveness of the bacterial cell surface. This chain is Biofilm dispersion protein BdlA (bdlA), found in Pseudomonas aeruginosa (strain ATCC 15692 / DSM 22644 / CIP 104116 / JCM 14847 / LMG 12228 / 1C / PRS 101 / PAO1).